We begin with the raw amino-acid sequence, 124 residues long: Small ribosomal subunit protein uS12 (124 aa).

The tract at residues 1 to 22 (MATVNQLVRKPRQKPDAKSNVA) is disordered. A 3-methylthioaspartic acid modification is found at aspartate 89.

This sequence belongs to the universal ribosomal protein uS12 family. Part of the 30S ribosomal subunit. Contacts proteins S8 and S17. May interact with IF1 in the 30S initiation complex.

In terms of biological role, with S4 and S5 plays an important role in translational accuracy. Its function is as follows. Interacts with and stabilizes bases of the 16S rRNA that are involved in tRNA selection in the A site and with the mRNA backbone. Located at the interface of the 30S and 50S subunits, it traverses the body of the 30S subunit contacting proteins on the other side and probably holding the rRNA structure together. The combined cluster of proteins S8, S12 and S17 appears to hold together the shoulder and platform of the 30S subunit. This is Small ribosomal subunit protein uS12 from Pseudoalteromonas atlantica (strain T6c / ATCC BAA-1087).